Here is a 349-residue protein sequence, read N- to C-terminus: Phosphate acyltransferase (349 aa).

This sequence belongs to the PlsX family. In terms of assembly, homodimer. Probably interacts with PlsY.

The protein localises to the cytoplasm. The enzyme catalyses a fatty acyl-[ACP] + phosphate = an acyl phosphate + holo-[ACP]. It functions in the pathway lipid metabolism; phospholipid metabolism. Functionally, catalyzes the reversible formation of acyl-phosphate (acyl-PO(4)) from acyl-[acyl-carrier-protein] (acyl-ACP). This enzyme utilizes acyl-ACP as fatty acyl donor, but not acyl-CoA. The sequence is that of Phosphate acyltransferase from Rhodospirillum rubrum (strain ATCC 11170 / ATH 1.1.1 / DSM 467 / LMG 4362 / NCIMB 8255 / S1).